The primary structure comprises 252 residues: Triosephosphate isomerase (252 aa).

10 to 12 (NWK) provides a ligand contact to substrate. The active-site Electrophile is the H96. The Proton acceptor role is filled by E168. Residues G174, S213, and 234–235 (GG) contribute to the substrate site.

Belongs to the triosephosphate isomerase family. Homodimer.

It is found in the cytoplasm. The catalysed reaction is D-glyceraldehyde 3-phosphate = dihydroxyacetone phosphate. Its pathway is carbohydrate biosynthesis; gluconeogenesis. It functions in the pathway carbohydrate degradation; glycolysis; D-glyceraldehyde 3-phosphate from glycerone phosphate: step 1/1. Functionally, involved in the gluconeogenesis. Catalyzes stereospecifically the conversion of dihydroxyacetone phosphate (DHAP) to D-glyceraldehyde-3-phosphate (G3P). The polypeptide is Triosephosphate isomerase (Idiomarina loihiensis (strain ATCC BAA-735 / DSM 15497 / L2-TR)).